Consider the following 150-residue polypeptide: SsrA-binding protein (150 aa).

This sequence belongs to the SmpB family.

It localises to the cytoplasm. In terms of biological role, required for rescue of stalled ribosomes mediated by trans-translation. Binds to transfer-messenger RNA (tmRNA), required for stable association of tmRNA with ribosomes. tmRNA and SmpB together mimic tRNA shape, replacing the anticodon stem-loop with SmpB. tmRNA is encoded by the ssrA gene; the 2 termini fold to resemble tRNA(Ala) and it encodes a 'tag peptide', a short internal open reading frame. During trans-translation Ala-aminoacylated tmRNA acts like a tRNA, entering the A-site of stalled ribosomes, displacing the stalled mRNA. The ribosome then switches to translate the ORF on the tmRNA; the nascent peptide is terminated with the 'tag peptide' encoded by the tmRNA and targeted for degradation. The ribosome is freed to recommence translation, which seems to be the essential function of trans-translation. The chain is SsrA-binding protein from Chlamydia caviae (strain ATCC VR-813 / DSM 19441 / 03DC25 / GPIC) (Chlamydophila caviae).